Consider the following 438-residue polypeptide: Thymidine phosphorylase (438 aa).

The protein belongs to the thymidine/pyrimidine-nucleoside phosphorylase family. In terms of assembly, homodimer.

It carries out the reaction thymidine + phosphate = 2-deoxy-alpha-D-ribose 1-phosphate + thymine. The protein operates within pyrimidine metabolism; dTMP biosynthesis via salvage pathway; dTMP from thymine: step 1/2. The enzymes which catalyze the reversible phosphorolysis of pyrimidine nucleosides are involved in the degradation of these compounds and in their utilization as carbon and energy sources, or in the rescue of pyrimidine bases for nucleotide synthesis. The sequence is that of Thymidine phosphorylase from Sinorhizobium medicae (strain WSM419) (Ensifer medicae).